The primary structure comprises 1281 residues: Tubulin polyglutamylase TTLL5 (1281 aa).

The TTL domain maps to 62-407; that stretch reads RYHLSYKIVR…VCQDPAQRAS (346 aa). ATP contacts are provided by residues lysine 180, 186-187, 208-211, and 221-223; these read RG, SRYI, and KFD. A protein is bound at residue arginine 186. Arginine 247 lines the L-glutamate pocket. 268 to 269 serves as a coordination point for ATP; it reads TN. Tyrosine 270, serine 271, and lysine 293 together coordinate L-glutamate. Aspartate 353, glutamate 366, and asparagine 368 together coordinate Mg(2+). The tract at residues 378–488 is c-MTBD region; sequence PLDLKIKASM…RGGFIRIFPT (111 aa). Lysine 384 contacts L-glutamate. 3 disordered regions span residues 577-614, 1072-1114, and 1199-1281; these read MNVKTETESEEEEEVALDNEDEEQEASQEESAGFLREN, SASA…LQTG, and SSAT…HTKI. The segment covering 584–604 has biased composition (acidic residues); that stretch reads ESEEEEEVALDNEDEEQEASQ. Composition is skewed to polar residues over residues 1086–1113, 1199–1212, 1240–1263, and 1270–1281; these read SGPTWSTQSDPQAPENHSSSPGSRSLQT, SSATASGQKPTTLP, ATSQKASKGSSAEGQLNGLQSSLN, and ITSSTDPAHTKI.

The protein belongs to the tubulin--tyrosine ligase family. In terms of assembly, interacts with the transcriptional coactivators NCOA1/SRC-1 and NCOA2/TIF2. Mg(2+) is required as a cofactor. As to expression, expressed in the retina, found in the rod and cone photoreceptors (at protein level). Widely expressed with highest levels in heart and skeletal muscle and low levels in other tissues.

Its subcellular location is the cell projection. It localises to the cilium. The protein localises to the cytoplasm. The protein resides in the cytoskeleton. It is found in the cilium basal body. Its subcellular location is the nucleus. It catalyses the reaction L-glutamyl-[protein] + L-glutamate + ATP = gamma-L-glutamyl-L-glutamyl-[protein] + ADP + phosphate + H(+). The catalysed reaction is (L-glutamyl)(n)-gamma-L-glutamyl-L-glutamyl-[protein] + L-glutamate + ATP = (L-glutamyl)(n+1)-gamma-L-glutamyl-L-glutamyl-[protein] + ADP + phosphate + H(+). In terms of biological role, polyglutamylase which modifies tubulin, generating polyglutamate side chains on the gamma-carboxyl group of specific glutamate residues within the C-terminal tail of tubulin. Preferentially mediates ATP-dependent initiation step of the polyglutamylation reaction over the elongation step. Preferentially modifies the alpha-tubulin tail over a beta-tail. Required for CCSAP localization to both polyglutamylated spindle and cilia microtubules. Increases the effects of transcriptional coactivator NCOA2/TIF2 in glucocorticoid receptor-mediated repression and induction and in androgen receptor-mediated induction. This Homo sapiens (Human) protein is Tubulin polyglutamylase TTLL5.